The following is a 747-amino-acid chain: Elongation factor G, mitochondrial (747 aa).

The transit peptide at 1-32 (MTLITRVLNGNLPLRLSTLKAARQLQCGYSSH) directs the protein to the mitochondrion. The region spanning 42 to 319 (ERIRNIGISA…AVVDYLPNPG (278 aa)) is the tr-type G domain. Residues 51-58 (AHIDSGKT), 118-122 (DTPGH), and 172-175 (NKLD) contribute to the GTP site.

This sequence belongs to the TRAFAC class translation factor GTPase superfamily. Classic translation factor GTPase family. EF-G/EF-2 subfamily.

It is found in the mitochondrion. The protein operates within protein biosynthesis; polypeptide chain elongation. Mitochondrial GTPase that catalyzes the GTP-dependent ribosomal translocation step during translation elongation. During this step, the ribosome changes from the pre-translocational (PRE) to the post-translocational (POST) state as the newly formed A-site-bound peptidyl-tRNA and P-site-bound deacylated tRNA move to the P and E sites, respectively. Catalyzes the coordinated movement of the two tRNA molecules, the mRNA and conformational changes in the ribosome. Essential during development as it acts as a retrograde signal from mitochondria to the nucleus to slow down cell proliferation if mitochondrial energy output is low. The protein is Elongation factor G, mitochondrial of Drosophila mojavensis (Fruit fly).